A 455-amino-acid chain; its full sequence is Na(+)/H(+) antiporter NhaA (455 aa).

Helical transmembrane passes span 31–51 (ASGILLIVSTAAALVWANSPW), 83–103 (GLMSIFFFLVGLEIKREVLIG), 113–133 (FPLIAAVGGTVVPAVIYLLCV), 141–161 (GWGIPMATDIAFALGVLILLG), 170–190 (VFVTALAIVDDIIAVLVIALF), 198–218 (VSLLVALGGVGIAFGFNLLGI), 231–251 (IWAAVLKSGVHATVAGVLLAF), 309–329 (GLQPWVSFLIMPLFAFSNAGV), 345–365 (IGVALGLFLGKPLGIWLFAWL), 383–403 (IFGASWICGIGFTMSLFIASL), and 414–434 (SKIGTLAASLVAGVCGSVVLW).

Belongs to the NhaA Na(+)/H(+) (TC 2.A.33) antiporter family.

The protein resides in the cell inner membrane. The catalysed reaction is Na(+)(in) + 2 H(+)(out) = Na(+)(out) + 2 H(+)(in). In terms of biological role, na(+)/H(+) antiporter that extrudes sodium in exchange for external protons. The protein is Na(+)/H(+) antiporter NhaA of Koribacter versatilis (strain Ellin345).